The chain runs to 263 residues: Small ribosomal subunit protein bS1c (263 aa).

S1 motif domains follow at residues 27–96 (GDIV…LSIR), 114–178 (DSLL…LSHR), and 192–260 (GNII…LSMK).

Belongs to the bacterial ribosomal protein bS1 family.

It localises to the plastid. The protein localises to the chloroplast. This is Small ribosomal subunit protein bS1c (rps1) from Pyropia yezoensis (Susabi-nori).